The following is a 274-amino-acid chain: Cytochrome b-c1 complex subunit Rieske, mitochondrial (274 aa).

Residues serine 79 to serine 103 lie on the Mitochondrial matrix side of the membrane. The chain crosses the membrane as a helical span at residues arginine 104 to methionine 140. The Mitochondrial intermembrane segment spans residues serine 141–glycine 274. In terms of domain architecture, Rieske spans glutamate 187–isoleucine 272. Positions 217, 219, 236, 239, and 241 each coordinate [2Fe-2S] cluster. A disulfide bridge connects residues cysteine 222 and cysteine 238.

This sequence belongs to the Rieske iron-sulfur protein family. Component of the ubiquinol-cytochrome c oxidoreductase (cytochrome b-c1 complex, complex III, CIII), a multisubunit enzyme composed of 11 subunits. The complex is composed of 3 respiratory subunits cytochrome b, cytochrome c1 and Rieske protein UQCRFS1, 2 core protein subunits UQCRC1/QCR1 and UQCRC2/QCR2, and 6 low-molecular weight protein subunits UQCRH/QCR6, UQCRB/QCR7, UQCRQ/QCR8, UQCR10/QCR9, UQCR11/QCR10 and subunit 9, the cleavage product of Rieske protein UQCRFS1. The complex exists as an obligatory dimer and forms supercomplexes (SCs) in the inner mitochondrial membrane with NADH-ubiquinone oxidoreductase (complex I, CI) and cytochrome c oxidase (complex IV, CIV), resulting in different assemblies (supercomplex SCI(1)III(2)IV(1) and megacomplex MCI(2)III(2)IV(2)). Incorporation of the Rieske protein UQCRFS1 is the penultimate step in complex III assembly. Interacts with TTC19, which is involved in the clearance of UQCRFS1 fragments. In terms of assembly, component of the ubiquinol-cytochrome c oxidoreductase (cytochrome b-c1 complex, complex III, CIII). Subunit 9 corresponds to the mitochondrial targeting sequence (MTS) of Rieske protein UQCRFS1. It is retained after processing and incorporated inside complex III, where it remains bound to the complex and localizes between the 2 core subunits UQCRC1/QCR1 and UQCRC2/QCR2. It depends on [2Fe-2S] cluster as a cofactor. Proteolytic processing is necessary for the correct insertion of UQCRFS1 in the complex III dimer. Several fragments are generated during UQCRFS1 insertion, most probably due to the endogenous matrix-processing peptidase (MPP) activity of the 2 core protein subunits UQCRC1/QCR1 and UQCRC2/QCR2, which are homologous to the 2 mitochondrial-processing peptidase (MPP) subunits beta-MPP and alpha-MPP respectively. The action of the protease is also necessary for the clearance of the UQCRFS1 fragments.

Its subcellular location is the mitochondrion inner membrane. It carries out the reaction a quinol + 2 Fe(III)-[cytochrome c](out) = a quinone + 2 Fe(II)-[cytochrome c](out) + 2 H(+)(out). In terms of biological role, component of the ubiquinol-cytochrome c oxidoreductase, a multisubunit transmembrane complex that is part of the mitochondrial electron transport chain which drives oxidative phosphorylation. The respiratory chain contains 3 multisubunit complexes succinate dehydrogenase (complex II, CII), ubiquinol-cytochrome c oxidoreductase (cytochrome b-c1 complex, complex III, CIII) and cytochrome c oxidase (complex IV, CIV), that cooperate to transfer electrons derived from NADH and succinate to molecular oxygen, creating an electrochemical gradient over the inner membrane that drives transmembrane transport and the ATP synthase. The cytochrome b-c1 complex catalyzes electron transfer from ubiquinol to cytochrome c, linking this redox reaction to translocation of protons across the mitochondrial inner membrane, with protons being carried across the membrane as hydrogens on the quinol. In the process called Q cycle, 2 protons are consumed from the matrix, 4 protons are released into the intermembrane space and 2 electrons are passed to cytochrome c. The Rieske protein is a catalytic core subunit containing a [2Fe-2S] iron-sulfur cluster. It cycles between 2 conformational states during catalysis to transfer electrons from the quinol bound in the Q(0) site in cytochrome b to cytochrome c1. Incorporation of UQCRFS1 is the penultimate step in complex III assembly. Component of the ubiquinol-cytochrome c oxidoreductase (cytochrome b-c1 complex, complex III, CIII). UQCRFS1 undergoes proteolytic processing once it is incorporated in the complex III dimer. One of the fragments, called subunit 9, corresponds to its mitochondrial targeting sequence (MTS). The proteolytic processing is necessary for the correct insertion of UQCRFS1 in the complex III dimer, but the persistence of UQCRFS1-derived fragments may prevent newly imported UQCRFS1 to be processed and assembled into complex III and is detrimental for the complex III structure and function. In Pan paniscus (Pygmy chimpanzee), this protein is Cytochrome b-c1 complex subunit Rieske, mitochondrial (UQCRFS1).